Reading from the N-terminus, the 288-residue chain is Nickel/cobalt efflux system RcnA (288 aa).

The Periplasmic segment spans residues 1-12 (MGEFSTLLQQGN). The helical transmembrane segment at 13-33 (AWFFIPSAILLGVLHGLEPGH) threads the bilayer. The Cytoplasmic segment spans residues 34–51 (SKTMMAAFIIAIKGTIKQ). A helical transmembrane segment spans residues 52 to 72 (AVMLGLAATLSHTAVVWLIAL). At 73–85 (GGMYVSRAFTAES) the chain is on the periplasmic side. The chain crosses the membrane as a helical span at residues 86 to 106 (VEPWLQLVSAIIILSTAFWMF). The Cytoplasmic segment spans residues 107–188 (WRTWKGERDG…FHDREVTNGQ (82 aa)). The segment covering 125–137 (THHHHDHEHHHHD) has biased composition (basic residues). Positions 125–144 (THHHHDHEHHHHDHDHDHHH) are disordered. Residues 189 to 209 (ILLFGLTGGLIPCPAAITVLL) traverse the membrane as a helical segment. Over 210 to 223 (ICIQLKAFTLGATM) the chain is Periplasmic. Residues 224–244 (VLCFSIGLALTLVAVGVGAAI) form a helical membrane-spanning segment. Over 245-266 (SVQQAAKRWSGFNTLARKAPYF) the chain is Cytoplasmic. The helical transmembrane segment at 267–287 (SSILIGLVGLYMGMHGYLGII) threads the bilayer. A topological domain (periplasmic) is located at residue R288.

This sequence belongs to the NiCoT transporter (TC 2.A.52) family. RcnA subfamily.

Its subcellular location is the cell inner membrane. Efflux system for nickel and cobalt. This chain is Nickel/cobalt efflux system RcnA (rcnA), found in Citrobacter koseri (strain ATCC BAA-895 / CDC 4225-83 / SGSC4696).